Here is a 488-residue protein sequence, read N- to C-terminus: N-succinylglutamate 5-semialdehyde dehydrogenase (488 aa).

Residue 221 to 226 (GSSRTG) coordinates NAD(+). Active-site residues include Glu-244 and Cys-278.

The protein belongs to the aldehyde dehydrogenase family. AstD subfamily.

The catalysed reaction is N-succinyl-L-glutamate 5-semialdehyde + NAD(+) + H2O = N-succinyl-L-glutamate + NADH + 2 H(+). The protein operates within amino-acid degradation; L-arginine degradation via AST pathway; L-glutamate and succinate from L-arginine: step 4/5. Its function is as follows. Catalyzes the NAD-dependent reduction of succinylglutamate semialdehyde into succinylglutamate. This chain is N-succinylglutamate 5-semialdehyde dehydrogenase, found in Pseudomonas fluorescens (strain Pf0-1).